We begin with the raw amino-acid sequence, 541 residues long: Plasminogen-binding protein PgbB (541 aa).

Basic and acidic residues-rich tracts occupy residues H420–V434 and V446–K455. The disordered stretch occupies residues H420–K541. The span at D456 to I476 shows a compositional bias: polar residues. The span at N480–K541 shows a compositional bias: basic and acidic residues.

Its subcellular location is the cell surface. In terms of biological role, binds plasminogen, specifically, and in a concentration and lysine-dependent manner. Plasminogen is the precursor of plasmin, a serine protease that cleaves fibrin, fibronectin, laminin and vitronectin. Acquisition of plasminogen/plasmin could enable H.pylori to degrade host components. The sequence is that of Plasminogen-binding protein PgbB (pgbB) from Helicobacter pylori (strain J99 / ATCC 700824) (Campylobacter pylori J99).